The following is a 328-amino-acid chain: Deoxynucleotidyltransferase terminal-interacting protein 1 (328 aa).

Disordered stretches follow at residues 1-30 (MGAT…GAAG) and 142-176 (ELPG…HVLS). Residues 12–22 (GPGGAERGGLE) show a composition bias toward gly residues. Residues 56-147 (MTTSFTDPAI…RLAHELPGIK (92 aa)) form an important for dimerization region. Residues 142–158 (ELPGIKRGRQAEEESHR) are compositionally biased toward basic and acidic residues. A DNA-binding region (a.T hook) is located at residues 158-172 (RGSPIPKKRKGRPPG). Phosphoserine is present on S160. A Nuclear localization signal motif is present at residues 163–169 (PKKRKGR). The segment at 196-315 (REGPKWDPAR…MRKYMETLRT (120 aa)) is important for DNA and nucleosome binding. The H-T-H motif DNA-binding region spans 215–236 (GSRANKALGMGGTRGRIYIKHP).

In terms of assembly, monomer and homodimer. A minor proportion may form homotrimers. Interacts with ZNF541. Interacts with the terminal deoxynucleotidyltransferase DNTT. Interacts with TRERF1. Identified in a histone deacetylase complex that contains DNTTIP1, HDAC1 and MIDEAS; this complex assembles into a tetramer that contains four copies of each protein chain. Component of a histone deacetylase complex containing DNTTIP1, ZNF541, HDAC1 and HDAC2. Identified in a complex with KCTD19, HDAC1, HDAC2 and ZNF541.

It is found in the nucleus. Its function is as follows. Increases DNTT terminal deoxynucleotidyltransferase activity (in vitro). Also acts as a transcriptional regulator, binding to the consensus sequence 5'-GNTGCATG-3' following an AT-tract. Associates with RAB20 promoter and positively regulates its transcription. Binds DNA and nucleosomes; may recruit HDAC1 complexes to nucleosomes or naked DNA. The chain is Deoxynucleotidyltransferase terminal-interacting protein 1 (Dnttip1) from Mus musculus (Mouse).